Consider the following 257-residue polypeptide: 5'-nucleotidase SurE (257 aa).

Residues aspartate 8, aspartate 9, serine 40, and asparagine 95 each coordinate a divalent metal cation.

Belongs to the SurE nucleotidase family. The cofactor is a divalent metal cation.

The protein resides in the cytoplasm. The enzyme catalyses a ribonucleoside 5'-phosphate + H2O = a ribonucleoside + phosphate. Nucleotidase that shows phosphatase activity on nucleoside 5'-monophosphates. The sequence is that of 5'-nucleotidase SurE from Desulfovibrio desulfuricans (strain ATCC 27774 / DSM 6949 / MB).